Here is a 202-residue protein sequence, read N- to C-terminus: Small ribosomal subunit protein uS4 (202 aa).

A disordered region spans residues 16 to 42 (GELPGLSRKNPRRAYPPGQHGQARKKR). The S4 RNA-binding domain occupies 90-151 (MRLDNTVFRL…QERSRRLVEA (62 aa)).

The protein belongs to the universal ribosomal protein uS4 family. In terms of assembly, part of the 30S ribosomal subunit. Contacts protein S5. The interaction surface between S4 and S5 is involved in control of translational fidelity.

Its function is as follows. One of the primary rRNA binding proteins, it binds directly to 16S rRNA where it nucleates assembly of the body of the 30S subunit. Functionally, with S5 and S12 plays an important role in translational accuracy. In Rippkaea orientalis (strain PCC 8801 / RF-1) (Cyanothece sp. (strain PCC 8801)), this protein is Small ribosomal subunit protein uS4.